We begin with the raw amino-acid sequence, 540 residues long: Chaperonin GroEL (540 aa).

ATP is bound by residues 29 to 32 (TLGP), 86 to 90 (DGTTT), G413, 476 to 478 (NAA), and D492.

This sequence belongs to the chaperonin (HSP60) family. In terms of assembly, forms a cylinder of 14 subunits composed of two heptameric rings stacked back-to-back. Interacts with the co-chaperonin GroES.

The protein resides in the cytoplasm. It catalyses the reaction ATP + H2O + a folded polypeptide = ADP + phosphate + an unfolded polypeptide.. Together with its co-chaperonin GroES, plays an essential role in assisting protein folding. The GroEL-GroES system forms a nano-cage that allows encapsulation of the non-native substrate proteins and provides a physical environment optimized to promote and accelerate protein folding. The sequence is that of Chaperonin GroEL from Streptococcus gordonii (strain Challis / ATCC 35105 / BCRC 15272 / CH1 / DL1 / V288).